The chain runs to 405 residues: Pentatricopeptide repeat-containing protein At3g14580, mitochondrial (405 aa).

A mitochondrion-targeting transit peptide spans 1–37 (MILRRLVLSATSNSNPRRSQSLSSSGVRILSSSSSDR). A disordered region spans residues 13 to 44 (NSNPRRSQSLSSSGVRILSSSSSDRYTSSSQR). PPR repeat units follow at residues 94-124 (TESLYALMINKFGQAKMYDEIEEVMRTIKLE), 130-165 (SEEFFYNLMRIYGNLAGRINRAIEILFGMPDFGCWP), 166-200 (SSKSFNFILNLLVSAKLFDEIHKIFVSAPKLGVEI), 201-235 (DACCLNILIKGLCESGNLEAALQLLDEFPQQKSRP), 236-270 (NVMTFSPLIRGFCNKGKFEEAFKLLERMEKERIEP), 271-305 (DTITFNILISGLRKKGRVEEGIDLLERMKVKGCEP), 306-340 (NPGTYQEVLYGLLDKKRNLEAKEMMSQMISWGMRP), and 341-375 (SFLSYKKMVLGLCETKSVVEMDWVLRQMVNHGFVP).

Belongs to the PPR family. P subfamily.

Its subcellular location is the mitochondrion. This Arabidopsis thaliana (Mouse-ear cress) protein is Pentatricopeptide repeat-containing protein At3g14580, mitochondrial.